Consider the following 187-residue polypeptide: Ribosome-recycling factor (187 aa).

This sequence belongs to the RRF family.

It is found in the cytoplasm. Its function is as follows. Responsible for the release of ribosomes from messenger RNA at the termination of protein biosynthesis. May increase the efficiency of translation by recycling ribosomes from one round of translation to another. This chain is Ribosome-recycling factor, found in Orientia tsutsugamushi (strain Boryong) (Rickettsia tsutsugamushi).